We begin with the raw amino-acid sequence, 685 residues long: DNA ligase (685 aa).

NAD(+)-binding positions include 48-52 (DAEYD), 97-98 (SL), and Glu131. The N6-AMP-lysine intermediate role is filled by Lys133. 4 residues coordinate NAD(+): Arg154, Glu190, Lys304, and Lys328. The Zn(2+) site is built by Cys422, Cys425, Cys440, and Cys445. In terms of domain architecture, BRCT spans 603 to 685 (PEEGPLSGRR…RLLSGEERPG (83 aa)).

Belongs to the NAD-dependent DNA ligase family. LigA subfamily. The cofactor is Mg(2+). It depends on Mn(2+) as a cofactor.

The enzyme catalyses NAD(+) + (deoxyribonucleotide)n-3'-hydroxyl + 5'-phospho-(deoxyribonucleotide)m = (deoxyribonucleotide)n+m + AMP + beta-nicotinamide D-nucleotide.. DNA ligase that catalyzes the formation of phosphodiester linkages between 5'-phosphoryl and 3'-hydroxyl groups in double-stranded DNA using NAD as a coenzyme and as the energy source for the reaction. It is essential for DNA replication and repair of damaged DNA. This chain is DNA ligase, found in Rubrobacter xylanophilus (strain DSM 9941 / JCM 11954 / NBRC 16129 / PRD-1).